The following is a 587-amino-acid chain: MEDLSETFDIYAICACCKVLNDDEKVRCFNNKTFKGIGNAGVLPWKCNLIDMKYFSSVTSYINENNYIRLKWKRDKYMEKHNLKNNVELNTNIISSTNNLQNIVVMGKKSWESIPKKFKPLQNRINIILSRTLKKEDIVNENNNENNNVIIIKSVDDLFPILKCTKYYKCFIIGGSSVYKEFLDRNLIKKIYFTRINNSYNCDVLFPEINENLFKITSISDVYYSNNTTLDFIIYSKTKEINPNEEVPNNTFLGVCDEQNKAFDDEDDYTYFSFNKNKENIKKNSEHAHNFKIYNSIKYKNHPEYQYLNIIYDIIMHGNKQDDRTGVGVLSKFGYMMKFNLNEYFPLLTTKKLFIRGIIEELLWFIRGETNGNTLLEKNVRIWEANGTREFLDNRKLFHREVNDLGPIYGFQWRHFGAEYTDMHDNYKDKGVDQLKNIINLIKNDPTCRRIILCAWNVKNLDQMALPPCHILCQFYVFDGKLSCIMYQRSCDLGLGVPFNIASYSIFTYMIAQVCNLQAAEFIHVLGNAHVYNNHIESLKIQLNRTPYPFPTLKLNPDIKNIEDFTISDFTVQNYVHHDKINMDMAA.

The DHFR domain occupies 9 to 237 (DIYAICACCK…TTLDFIIYSK (229 aa)). Residue 36-42 (GIGNAGV) participates in NADP(+) binding. Residue Asp51 coordinates substrate. NADP(+) is bound by residues 108–110 (KKS) and 129–132 (LSRT). Substrate-binding residues include Ile173, Tyr179, and Thr194. 174-181 (GGSSVYKE) lines the NADP(+) pocket. Residues 301 to 587 (NHPEYQYLNI…HDKINMDMAA (287 aa)) form a thymidylate synthase region. DUMP is bound at residue Arg324. Residue Cys469 is part of the active site. DUMP is bound by residues His470, 488–492 (QRSCD), Asn500, and 530–532 (HVY).

The protein in the N-terminal section; belongs to the dihydrofolate reductase family. It in the C-terminal section; belongs to the thymidylate synthase family. In terms of assembly, homodimer.

The enzyme catalyses (6S)-5,6,7,8-tetrahydrofolate + NADP(+) = 7,8-dihydrofolate + NADPH + H(+). It carries out the reaction dUMP + (6R)-5,10-methylene-5,6,7,8-tetrahydrofolate = 7,8-dihydrofolate + dTMP. It participates in cofactor biosynthesis; tetrahydrofolate biosynthesis; 5,6,7,8-tetrahydrofolate from 7,8-dihydrofolate: step 1/1. In terms of biological role, bifunctional enzyme. Involved in de novo dTMP biosynthesis. Key enzyme in folate metabolism. Catalyzes an essential reaction for de novo glycine and purine synthesis, DNA precursor synthesis, and for the conversion of dUMP to dTMP. The polypeptide is Bifunctional dihydrofolate reductase-thymidylate synthase (Plasmodium berghei (strain Anka)).